The chain runs to 348 residues: Hereditary hemochromatosis protein (348 aa).

The first 22 residues, 1-22 (MGPRARPALLLLMLLQTAVLQG), serve as a signal peptide directing secretion. The alpha-1 stretch occupies residues 23 to 114 (RLLRSHSLHY…IMENHNHSKE (92 aa)). The Extracellular portion of the chain corresponds to 23 to 306 (RLLRSHSLHY…WEPSPSGTLV (284 aa)). N-linked (GlcNAc...) asparagine glycans are attached at residues asparagine 110, asparagine 130, and asparagine 234. The alpha-2 stretch occupies residues 115 to 205 (SHTLQVILGC…ELGRGVLDQQ (91 aa)). Intrachain disulfides connect cysteine 124–cysteine 187 and cysteine 225–cysteine 282. Residues 206 to 297 (VPPLVKVTHH…GLDQPLIVIW (92 aa)) are alpha-3. Residues 207–298 (PPLVKVTHHV…LDQPLIVIWE (92 aa)) enclose the Ig-like C1-type domain. Residues 298-306 (EPSPSGTLV) form a connecting peptide region. Residues 307 to 330 (IGVISGIAVFVVILFIGILFIILR) traverse the membrane as a helical segment. At 331–348 (KRQGSRGAMGHYVLAERE) the chain is on the cytoplasmic side.

The protein belongs to the MHC class I family. Binds TFR through the extracellular domain in a pH-dependent manner. As to expression, expressed in all tissues tested except brain.

The protein localises to the cell membrane. Functionally, binds to transferrin receptor (TFR) and reduces its affinity for iron-loaded transferrin. This chain is Hereditary hemochromatosis protein (HFE), found in Homo sapiens (Human).